Here is a 185-residue protein sequence, read N- to C-terminus: Pyruvate/ketoisovalerate oxidoreductases common subunit gamma (185 aa).

In terms of assembly, heterotetramer of one alpha, one beta, one delta and one gamma chain.

The enzyme catalyses 2 oxidized [2Fe-2S]-[ferredoxin] + pyruvate + CoA = 2 reduced [2Fe-2S]-[ferredoxin] + acetyl-CoA + CO2 + H(+). It catalyses the reaction 3-methyl-2-oxobutanoate + 2 oxidized [2Fe-2S]-[ferredoxin] + CoA = 2-methylpropanoyl-CoA + 2 reduced [2Fe-2S]-[ferredoxin] + CO2 + H(+). This Thermococcus kodakarensis (strain ATCC BAA-918 / JCM 12380 / KOD1) (Pyrococcus kodakaraensis (strain KOD1)) protein is Pyruvate/ketoisovalerate oxidoreductases common subunit gamma (porG).